The sequence spans 285 residues: Eukaryotic translation initiation factor 3 subunit F-2 (285 aa).

One can recognise an MPN domain in the interval 11–145; sequence VFLKPLVLFQ…TRLYCAVEMG (135 aa).

The protein belongs to the eIF-3 subunit F family. Component of the eukaryotic translation initiation factor 3 (eIF-3) complex. The eIF-3 complex interacts with pix.

It localises to the cytoplasm. Component of the eukaryotic translation initiation factor 3 (eIF-3) complex, which is involved in protein synthesis of a specialized repertoire of mRNAs and, together with other initiation factors, stimulates binding of mRNA and methionyl-tRNAi to the 40S ribosome. The eIF-3 complex specifically targets and initiates translation of a subset of mRNAs involved in cell proliferation. This Drosophila sechellia (Fruit fly) protein is Eukaryotic translation initiation factor 3 subunit F-2.